The chain runs to 139 residues: Holo-[acyl-carrier-protein] synthase (139 aa).

Mg(2+) is bound by residues aspartate 8 and glutamate 57.

The protein belongs to the P-Pant transferase superfamily. AcpS family. Requires Mg(2+) as cofactor.

The protein resides in the cytoplasm. The enzyme catalyses apo-[ACP] + CoA = holo-[ACP] + adenosine 3',5'-bisphosphate + H(+). Its function is as follows. Transfers the 4'-phosphopantetheine moiety from coenzyme A to a Ser of acyl-carrier-protein. The sequence is that of Holo-[acyl-carrier-protein] synthase from Dinoroseobacter shibae (strain DSM 16493 / NCIMB 14021 / DFL 12).